The sequence spans 498 residues: Glycerol kinase (498 aa).

Threonine 12 lines the ADP pocket. 3 residues coordinate ATP: threonine 12, threonine 13, and serine 14. Residue threonine 12 participates in sn-glycerol 3-phosphate binding. Arginine 16 contacts ADP. Arginine 82, glutamate 83, and tyrosine 134 together coordinate sn-glycerol 3-phosphate. Glycerol is bound by residues arginine 82, glutamate 83, and tyrosine 134. The residue at position 230 (histidine 230) is a Phosphohistidine; by HPr. Aspartate 244 contributes to the sn-glycerol 3-phosphate binding site. Glycerol contacts are provided by aspartate 244 and glutamine 245. The ADP site is built by threonine 266 and glycine 309. Residues threonine 266, glycine 309, glutamine 313, and glycine 410 each contribute to the ATP site. ADP is bound by residues glycine 410 and asparagine 414.

This sequence belongs to the FGGY kinase family. As to quaternary structure, homotetramer and homodimer (in equilibrium). Post-translationally, the phosphoenolpyruvate-dependent sugar phosphotransferase system (PTS), including enzyme I, and histidine-containing protein (HPr) are required for the phosphorylation, which leads to the activation of the enzyme.

It carries out the reaction glycerol + ATP = sn-glycerol 3-phosphate + ADP + H(+). Its pathway is polyol metabolism; glycerol degradation via glycerol kinase pathway; sn-glycerol 3-phosphate from glycerol: step 1/1. With respect to regulation, activated by phosphorylation and inhibited by fructose 1,6-bisphosphate (FBP). Its function is as follows. Key enzyme in the regulation of glycerol uptake and metabolism. Catalyzes the phosphorylation of glycerol to yield sn-glycerol 3-phosphate. The chain is Glycerol kinase from Staphylococcus aureus (strain Mu50 / ATCC 700699).